Here is a 244-residue protein sequence, read N- to C-terminus: Myosin-7 (244 aa).

The rodlike tail (S2 and LMM domains) stretch occupies residues 1–244 (VEQTERSRKL…DIGTKGLNEE (244 aa)). Residues 1-244 (VEQTERSRKL…DIGTKGLNEE (244 aa)) are a coiled coil. Positions 216 to 244 (EERADIAESQVNKLRAKSRDIGTKGLNEE) are disordered. Over residues 232 to 244 (KSRDIGTKGLNEE) the composition is skewed to basic and acidic residues.

Muscle myosin is a hexameric protein that consists of 2 heavy chain subunits (MHC), 2 alkali light chain subunits (MLC) and 2 regulatory light chain subunits (MLC-2). Interacts with ECPAS. Interacts (via C-terminus) with LRRC39.

Its subcellular location is the cytoplasm. The protein resides in the myofibril. It is found in the sarcomere. Functionally, myosins are actin-based motor molecules with ATPase activity essential for muscle contraction. Forms regular bipolar thick filaments that, together with actin thin filaments, constitute the fundamental contractile unit of skeletal and cardiac muscle. This chain is Myosin-7 (MYH7), found in Papio hamadryas (Hamadryas baboon).